We begin with the raw amino-acid sequence, 262 residues long: [LysW]-aminoadipate/[LysW]-glutamate kinase (262 aa).

Substrate is bound by residues 35 to 36 (GG), Arg-62, and Asn-167.

It belongs to the acetylglutamate kinase family. LysZ subfamily.

It is found in the cytoplasm. It carries out the reaction [amino-group carrier protein]-C-terminal-N-(1,4-dicarboxybutan-1-yl)-L-glutamine + ATP = [amino-group carrier protein]-C-terminal-N-(1-carboxy-5-phosphooxy-5-oxopentan-1-yl)-L-glutamine + ADP. The enzyme catalyses [amino-group carrier protein]-C-terminal-gamma-(L-glutamyl)-L-glutamate + ATP = [amino-group carrier protein]-C-terminal-gamma-(5-phospho-L-glutamyl)-L-glutamate + ADP. It functions in the pathway amino-acid biosynthesis; L-lysine biosynthesis via AAA pathway; L-lysine from L-alpha-aminoadipate (Thermus route): step 2/5. Its pathway is amino-acid biosynthesis; L-arginine biosynthesis. Its function is as follows. Involved in both the arginine and lysine biosynthetic pathways. Phosphorylates the LysW-bound precursors glutamate (for arginine biosynthesis), respectively alpha-aminoadipate (for lysine biosynthesis). This chain is [LysW]-aminoadipate/[LysW]-glutamate kinase, found in Metallosphaera sedula (strain ATCC 51363 / DSM 5348 / JCM 9185 / NBRC 15509 / TH2).